The primary structure comprises 453 residues: tRNA modification GTPase MnmE (453 aa).

The (6S)-5-formyl-5,6,7,8-tetrahydrofolate site is built by arginine 22, glutamate 79, and lysine 119. The region spanning 215-376 (GMKVVIAGRP…LRNHLKECMG (162 aa)) is the TrmE-type G domain. Asparagine 225 is a K(+) binding site. GTP-binding positions include 225 to 230 (NAGKSS), 244 to 250 (TDIAGTT), 269 to 272 (DTAG), and 334 to 337 (NKAD). Position 229 (serine 229) interacts with Mg(2+). K(+) contacts are provided by threonine 244, isoleucine 246, and threonine 249. Threonine 250 is a Mg(2+) binding site. (6S)-5-formyl-5,6,7,8-tetrahydrofolate is bound at residue lysine 453.

Belongs to the TRAFAC class TrmE-Era-EngA-EngB-Septin-like GTPase superfamily. TrmE GTPase family. In terms of assembly, homodimer. Heterotetramer of two MnmE and two MnmG subunits. The cofactor is K(+).

Its subcellular location is the cytoplasm. Exhibits a very high intrinsic GTPase hydrolysis rate. Involved in the addition of a carboxymethylaminomethyl (cmnm) group at the wobble position (U34) of certain tRNAs, forming tRNA-cmnm(5)s(2)U34. This chain is tRNA modification GTPase MnmE, found in Vibrio vulnificus (strain YJ016).